Here is a 402-residue protein sequence, read N- to C-terminus: Imidazolonepropionase (402 aa).

Fe(3+)-binding residues include His-66 and His-68. His-66 and His-68 together coordinate Zn(2+). Residues Arg-75, Tyr-138, and His-171 each contribute to the 4-imidazolone-5-propanoate site. Residue Tyr-138 participates in N-formimidoyl-L-glutamate binding. Residue His-236 participates in Fe(3+) binding. His-236 contributes to the Zn(2+) binding site. Gln-239 lines the 4-imidazolone-5-propanoate pocket. Fe(3+) is bound at residue Asp-311. Residue Asp-311 coordinates Zn(2+). Residues Asn-313 and Gly-315 each coordinate N-formimidoyl-L-glutamate. Position 316 (Thr-316) interacts with 4-imidazolone-5-propanoate.

The protein belongs to the metallo-dependent hydrolases superfamily. HutI family. It depends on Zn(2+) as a cofactor. The cofactor is Fe(3+).

The protein resides in the cytoplasm. The catalysed reaction is 4-imidazolone-5-propanoate + H2O = N-formimidoyl-L-glutamate. The protein operates within amino-acid degradation; L-histidine degradation into L-glutamate; N-formimidoyl-L-glutamate from L-histidine: step 3/3. Catalyzes the hydrolytic cleavage of the carbon-nitrogen bond in imidazolone-5-propanoate to yield N-formimidoyl-L-glutamate. It is the third step in the universal histidine degradation pathway. In Pseudomonas aeruginosa (strain LESB58), this protein is Imidazolonepropionase.